The primary structure comprises 680 residues: Nodulation protein NolNO (680 aa).

This sequence belongs to the NodU/CmcH family.

Its subcellular location is the cytoplasm. In terms of biological role, involved in the O-carbamoylation of nod factors. This chain is Nodulation protein NolNO (nolO), found in Sinorhizobium fredii (strain NBRC 101917 / NGR234).